The sequence spans 74 residues: Exodeoxyribonuclease 7 small subunit (74 aa).

This sequence belongs to the XseB family. Heterooligomer composed of large and small subunits.

The protein resides in the cytoplasm. The catalysed reaction is Exonucleolytic cleavage in either 5'- to 3'- or 3'- to 5'-direction to yield nucleoside 5'-phosphates.. In terms of biological role, bidirectionally degrades single-stranded DNA into large acid-insoluble oligonucleotides, which are then degraded further into small acid-soluble oligonucleotides. This chain is Exodeoxyribonuclease 7 small subunit, found in Symbiobacterium thermophilum (strain DSM 24528 / JCM 14929 / IAM 14863 / T).